A 207-amino-acid polypeptide reads, in one-letter code: Low-molecular weight cobalt-containing nitrile hydratase subunit alpha (207 aa).

Co(3+)-binding residues include Cys-109, Cys-112, Ser-113, and Cys-114.

The protein belongs to the nitrile hydratase subunit alpha family. Heterodimer of an alpha and a beta chain. Co(3+) serves as cofactor.

It catalyses the reaction an aliphatic primary amide = an aliphatic nitrile + H2O. Functionally, NHase catalyzes the hydration of various nitrile compounds to the corresponding amides. This is Low-molecular weight cobalt-containing nitrile hydratase subunit alpha from Rhodococcus rhodochrous.